Reading from the N-terminus, the 368-residue chain is GDSL esterase/lipase At4g16230 (368 aa).

The first 24 residues, 1–24 (MSLLVFLCQIIVLSVLFFSEVCLA), serve as a signal peptide directing secretion. Residue Ser37 is the Nucleophile of the active site. N-linked (GlcNAc...) asparagine glycans are attached at residues Asn117 and Asn286. Residues Asp329 and His332 contribute to the active site.

Belongs to the 'GDSL' lipolytic enzyme family.

Its subcellular location is the secreted. This is GDSL esterase/lipase At4g16230 from Arabidopsis thaliana (Mouse-ear cress).